Here is a 146-residue protein sequence, read N- to C-terminus: Cytochrome c-556 (146 aa).

The signal sequence occupies residues 1-24 (MCMKLKTITAAMLFGCLCAGAVYA). 4 residues coordinate heme c: Met-35, Cys-135, Cys-138, and His-139.

As to quaternary structure, monomer. In terms of processing, binds 1 heme c group covalently per subunit.

Functionally, low-spin monoheme cytochrome c. The protein is Cytochrome c-556 of Agrobacterium fabrum (strain C58 / ATCC 33970) (Agrobacterium tumefaciens (strain C58)).